The sequence spans 409 residues: Elongation factor Tu (409 aa).

The tr-type G domain occupies 10–214; sequence KPHVNVGTIG…AVDSYIPTPE (205 aa). Positions 19 to 26 are G1; it reads GHVDHGKT. 19 to 26 contacts GTP; the sequence is GHVDHGKT. Thr-26 contacts Mg(2+). The G2 stretch occupies residues 60–64; it reads GITIN. Positions 81–84 are G3; it reads DCPG. GTP is bound by residues 81–85 and 136–139; these read DCPGH and NKAD. The G4 stretch occupies residues 136–139; sequence NKAD. Residues 174-176 form a G5 region; it reads SAL.

This sequence belongs to the TRAFAC class translation factor GTPase superfamily. Classic translation factor GTPase family. EF-Tu/EF-1A subfamily. As to quaternary structure, monomer.

Its subcellular location is the cytoplasm. The catalysed reaction is GTP + H2O = GDP + phosphate + H(+). Its function is as follows. GTP hydrolase that promotes the GTP-dependent binding of aminoacyl-tRNA to the A-site of ribosomes during protein biosynthesis. This chain is Elongation factor Tu, found in Synechococcus sp. (strain JA-2-3B'a(2-13)) (Cyanobacteria bacterium Yellowstone B-Prime).